Reading from the N-terminus, the 3112-residue chain is Genome polyprotein (3112 aa).

The Peptidase S30 domain maps to 234–383 (KLTQRRANKI…PDCLEGLTYY (150 aa)). Catalysis depends on for P1 proteinase activity residues histidine 286, aspartate 301, and serine 333. The Peptidase C6 domain occupies 729–850 (TLVPKSGFCY…IETFKDYRIG (122 aa)). Residues cysteine 737 and histidine 809 each act as for helper component proteinase activity in the active site. The region spanning 1278-1429 (NIATGAGNEF…CVPTNHKVDV (152 aa)) is the Helicase ATP-binding domain. 1291–1298 (GDVGSGKS) serves as a coordination point for ATP. The DECH box signature appears at 1379-1382 (DECH). The Helicase C-terminal domain occupies 1444–1627 (SIDSHAEGLR…EVNFVTREQV (184 aa)). A Peptidase C4 domain is found at 2096–2311 (DDNYVPHSRC…ISWKGVPTNM (216 aa)). Residues histidine 2140, aspartate 2174, and cysteine 2243 each act as for nuclear inclusion protein A activity in the active site. A RdRp catalytic domain is found at 2569 to 2687 (WKFIDADGSR…NAPQGVCETI (119 aa)). The tract at residues 2818 to 2867 (HSGADQSGVVKDQTGDKAEGSGTKTEDPPNQTTDPVNNPSNGGNKDAPQN) is disordered. The span at 2830–2844 (QTGDKAEGSGTKTED) shows a compositional bias: basic and acidic residues. A compositionally biased stretch (polar residues) spans 2845 to 2867 (PPNQTTDPVNNPSNGGNKDAPQN).

Belongs to the potyviridae genome polyprotein family. VPg is uridylylated by the polymerase and is covalently attached to the 5'-end of the genomic RNA. This uridylylated form acts as a nucleotide-peptide primer for the polymerase. Post-translationally, genome polyprotein of potyviruses undergoes post-translational proteolytic processing by the main proteinase NIa-pro resulting in the production of at least ten individual proteins. The P1 proteinase and the HC-pro cleave only their respective C-termini autocatalytically. 6K1 is essential for proper proteolytic separation of P3 from CI.

It is found in the host cytoplasmic vesicle. It localises to the virion. The enzyme catalyses RNA(n) + a ribonucleoside 5'-triphosphate = RNA(n+1) + diphosphate. It carries out the reaction Hydrolyzes glutaminyl bonds, and activity is further restricted by preferences for the amino acids in P6 - P1' that vary with the species of potyvirus, e.g. Glu-Xaa-Xaa-Tyr-Xaa-Gln-|-(Ser or Gly) for the enzyme from tobacco etch virus. The natural substrate is the viral polyprotein, but other proteins and oligopeptides containing the appropriate consensus sequence are also cleaved.. The catalysed reaction is Hydrolyzes a Gly-|-Gly bond at its own C-terminus, commonly in the sequence -Tyr-Xaa-Val-Gly-|-Gly, in the processing of the potyviral polyprotein.. In terms of biological role, required for aphid transmission and also has proteolytic activity. Only cleaves a Gly-Gly dipeptide at its own C-terminus. Interacts with virions and aphid stylets. Acts as a suppressor of RNA-mediated gene silencing, also known as post-transcriptional gene silencing (PTGS), a mechanism of plant viral defense that limits the accumulation of viral RNAs. May have RNA-binding activity. Functionally, has helicase activity. It may be involved in replication. Indispensable for virus replication. Its function is as follows. Mediates the cap-independent, EIF4E-dependent translation of viral genomic RNAs. Binds to the cap-binding site of host EIF4E and thus interferes with the host EIF4E-dependent mRNA export and translation. VPg-RNA directly binds EIF4E and is a template for transcription. Also forms trimeric complexes with EIF4E-EIF4G, which are templates for translation. In terms of biological role, has RNA-binding and proteolytic activities. Functionally, an RNA-dependent RNA polymerase that plays an essential role in the virus replication. Involved in aphid transmission, cell-to-cell and systemis movement, encapsidation of the viral RNA and in the regulation of viral RNA amplification. The chain is Genome polyprotein from Triticum aestivum (Wheat).